A 530-amino-acid polypeptide reads, in one-letter code: 26S proteasome non-ATPase regulatory subunit 3 (530 aa).

The span at 1–16 shows a compositional bias: basic and acidic residues; that stretch reads MKQEGSARRRGADKAK. The interval 1–65 is disordered; that stretch reads MKQEGSARRR…TEHSQRELDT (65 aa). Residues 17 to 30 are compositionally biased toward pro residues; sequence PPPGGEQEPPPPAP. Residue lysine 36 forms a Glycyl lysine isopeptide (Lys-Gly) (interchain with G-Cter in SUMO1); alternate linkage. A Glycyl lysine isopeptide (Lys-Gly) (interchain with G-Cter in SUMO2); alternate cross-link involves residue lysine 36. The region spanning 282–461 is the PCI domain; sequence ARYLYYTGRI…GYVQSKEMID (180 aa). 2 positions are modified to phosphoserine: serine 414 and serine 426. The disordered stretch occupies residues 496–530; that stretch reads SYNKDLESAEERREREQQDLEFAKEMAEDDDDSFP. Positions 497 to 521 are enriched in basic and acidic residues; sequence YNKDLESAEERREREQQDLEFAKEM.

The protein belongs to the proteasome subunit S3 family. In terms of assembly, component of the 19S proteasome regulatory particle complex. The 26S proteasome consists of a 20S core particle (CP) and two 19S regulatory subunits (RP). The regulatory particle is made of a lid composed of 9 subunits including PSMD3, a base containing 6 ATPases and few additional components. Interacts with UBQLN1 (via ubiquitin-like domain). Interacts with ERCC6.

In terms of biological role, component of the 26S proteasome, a multiprotein complex involved in the ATP-dependent degradation of ubiquitinated proteins. This complex plays a key role in the maintenance of protein homeostasis by removing misfolded or damaged proteins, which could impair cellular functions, and by removing proteins whose functions are no longer required. Therefore, the proteasome participates in numerous cellular processes, including cell cycle progression, apoptosis, or DNA damage repair. The protein is 26S proteasome non-ATPase regulatory subunit 3 (Psmd3) of Mus musculus (Mouse).